The primary structure comprises 214 residues: Adenylate kinase (214 aa).

10–15 (GAGKGT) serves as a coordination point for ATP. An NMP region spans residues 30-59 (STGDMFRDHKARGTELGKTVQAIMDAGGLV). AMP contacts are provided by residues Thr31, Arg36, 57–59 (GLV), 85–88 (GYPR), and Gln92. Residues 126–163 (GRRSCPKCGAVYHVSANPPRRMGYCDRDDAGLVQRDDD) form an LID region. Arg127 contacts ATP. Zn(2+) is bound by residues Cys130 and Cys133. 136–137 (VY) contacts ATP. Cys150 and Asp153 together coordinate Zn(2+). Positions 160 and 171 each coordinate AMP. ATP is bound at residue Gly199.

The protein belongs to the adenylate kinase family. In terms of assembly, monomer.

Its subcellular location is the cytoplasm. It carries out the reaction AMP + ATP = 2 ADP. It functions in the pathway purine metabolism; AMP biosynthesis via salvage pathway; AMP from ADP: step 1/1. Its function is as follows. Catalyzes the reversible transfer of the terminal phosphate group between ATP and AMP. Plays an important role in cellular energy homeostasis and in adenine nucleotide metabolism. In Anaeromyxobacter sp. (strain Fw109-5), this protein is Adenylate kinase.